The chain runs to 34 residues: Photosystem II reaction center protein M (34 aa).

Residues 7-27 form a helical membrane-spanning segment; it reads GFVASLMFILVPAIFLIVLYI.

The protein belongs to the PsbM family. As to quaternary structure, PSII is composed of 1 copy each of membrane proteins PsbA, PsbB, PsbC, PsbD, PsbE, PsbF, PsbH, PsbI, PsbJ, PsbK, PsbL, PsbM, PsbT, PsbX, PsbY, PsbZ, Psb30/Ycf12, peripheral proteins PsbO, CyanoQ (PsbQ), PsbU, PsbV and a large number of cofactors. It forms dimeric complexes.

The protein resides in the cellular thylakoid membrane. Functionally, one of the components of the core complex of photosystem II (PSII). PSII is a light-driven water:plastoquinone oxidoreductase that uses light energy to abstract electrons from H(2)O, generating O(2) and a proton gradient subsequently used for ATP formation. It consists of a core antenna complex that captures photons, and an electron transfer chain that converts photonic excitation into a charge separation. This subunit is found at the monomer-monomer interface. The polypeptide is Photosystem II reaction center protein M (Synechococcus sp. (strain CC9902)).